The sequence spans 123 residues: Cliotide T4 (123 aa).

The first 28 residues, 1-28, serve as a signal peptide directing secretion; that stretch reads MASLRIAPLALFFFLAASVMFTVEKTEA. Positions 29–58 form a cross-link, cyclopeptide (Gly-Asn); it reads GIPCGESCVFIPCITAAIGCSCKSKVCYRN. Cystine bridges form between C32–C48, C36–C50, and C41–C55. Residues 59-123 constitute a propeptide, removed in mature form; it reads HVIAAEAKTM…KDHLKMSITN (65 aa).

Post-translationally, contains 3 disulfide bonds. This is a cyclic peptide. In terms of tissue distribution, expressed in flower, stem, shoot, root, leaf, seed, pod and nodule (at protein level).

In terms of biological role, probably participates in a plant defense mechanism. Active against Gram-negative bacteria E.coli ATCC 700926 (MIC=1.0 uM), K.pneumoniae ATTC 13883 (MIC=5.5 uM) and P.aeruginosa ATCC 39018 (MIC=7.5 uM). Has hemolytic and cytotoxic activity. The chain is Cliotide T4 from Clitoria ternatea (Butterfly pea).